The sequence spans 629 residues: tRNA uridine 5-carboxymethylaminomethyl modification enzyme MnmG (629 aa).

FAD is bound by residues 13–18 (GGGHAG), V125, and S180. 273 to 287 (GPRYCPSIEDKVMRF) contacts NAD(+). Q370 provides a ligand contact to FAD.

It belongs to the MnmG family. In terms of assembly, homodimer. Heterotetramer of two MnmE and two MnmG subunits. The cofactor is FAD.

Its subcellular location is the cytoplasm. Its function is as follows. NAD-binding protein involved in the addition of a carboxymethylaminomethyl (cmnm) group at the wobble position (U34) of certain tRNAs, forming tRNA-cmnm(5)s(2)U34. The chain is tRNA uridine 5-carboxymethylaminomethyl modification enzyme MnmG from Escherichia coli O45:K1 (strain S88 / ExPEC).